A 154-amino-acid chain; its full sequence is S-ribosylhomocysteine lyase (154 aa).

Fe cation-binding residues include His58, His62, and Cys125.

Belongs to the LuxS family. As to quaternary structure, homodimer. It depends on Fe cation as a cofactor.

It carries out the reaction S-(5-deoxy-D-ribos-5-yl)-L-homocysteine = (S)-4,5-dihydroxypentane-2,3-dione + L-homocysteine. In terms of biological role, involved in the synthesis of autoinducer 2 (AI-2) which is secreted by bacteria and is used to communicate both the cell density and the metabolic potential of the environment. The regulation of gene expression in response to changes in cell density is called quorum sensing. Catalyzes the transformation of S-ribosylhomocysteine (RHC) to homocysteine (HC) and 4,5-dihydroxy-2,3-pentadione (DPD). The chain is S-ribosylhomocysteine lyase from Dichelobacter nodosus (strain VCS1703A).